The chain runs to 199 residues: UPF0301 protein Vapar_4617 (199 aa).

This sequence belongs to the UPF0301 (AlgH) family.

This chain is UPF0301 protein Vapar_4617, found in Variovorax paradoxus (strain S110).